We begin with the raw amino-acid sequence, 523 residues long: Light-independent protochlorophyllide reductase subunit B (523 aa).

Asp36 provides a ligand contact to [4Fe-4S] cluster. Asp290 (proton donor) is an active-site residue. 425 to 426 (GL) is a binding site for substrate.

The protein belongs to the ChlB/BchB/BchZ family. Protochlorophyllide reductase is composed of three subunits; ChlL, ChlN and ChlB. Forms a heterotetramer of two ChlB and two ChlN subunits. [4Fe-4S] cluster serves as cofactor.

The catalysed reaction is chlorophyllide a + oxidized 2[4Fe-4S]-[ferredoxin] + 2 ADP + 2 phosphate = protochlorophyllide a + reduced 2[4Fe-4S]-[ferredoxin] + 2 ATP + 2 H2O. It functions in the pathway porphyrin-containing compound metabolism; chlorophyll biosynthesis (light-independent). Component of the dark-operative protochlorophyllide reductase (DPOR) that uses Mg-ATP and reduced ferredoxin to reduce ring D of protochlorophyllide (Pchlide) to form chlorophyllide a (Chlide). This reaction is light-independent. The NB-protein (ChlN-ChlB) is the catalytic component of the complex. In Prochlorococcus marinus (strain MIT 9301), this protein is Light-independent protochlorophyllide reductase subunit B.